Here is a 125-residue protein sequence, read N- to C-terminus: Fumarate reductase subunit D (125 aa).

The next 3 membrane-spanning stretches (helical) occupy residues Phe-30 to Ile-50, Phe-63 to His-83, and Ile-105 to Ile-125.

The protein belongs to the FrdD family. Part of an enzyme complex containing four subunits: a flavoprotein (FrdA), an iron-sulfur protein (FrdB), and two hydrophobic anchor proteins (FrdC and FrdD).

The protein resides in the cell inner membrane. Its function is as follows. Anchors the catalytic components of the fumarate reductase complex to the cell membrane, binds quinones. The protein is Fumarate reductase subunit D of Vibrio campbellii (strain ATCC BAA-1116).